A 511-amino-acid chain; its full sequence is Intermediate cleaving peptidase 55 (511 aa).

The Mn(2+) site is built by aspartate 327, aspartate 338, histidine 417, glutamate 444, and glutamate 467.

The protein belongs to the peptidase M24B family. Mn(2+) is required as a cofactor.

It localises to the nucleus. The protein resides in the mitochondrion inner membrane. The enzyme catalyses The enzyme cleaves the 36-Pro-Pro-37 bond of cysteine desulfurase (EC 2.8.1.7) removing three amino acid residues (Tyr-Ser-Pro) from the N-terminus after cleavage by mitochondrial processing peptidase.. Aminopeptidase which cleaves preprotein intermediates that carry destabilizing N-ter amino acid residues after the mitochondrial processing peptidase (MPP) cleavage site and is thus critical for stabilization of the mitochondrial proteome. In Saccharomyces cerevisiae (strain ATCC 204508 / S288c) (Baker's yeast), this protein is Intermediate cleaving peptidase 55 (ICP55).